The sequence spans 199 residues: Tropomyosin-1 (199 aa).

Positions 1-199 (MDKIREKLSN…DEIAASLENL (199 aa)) form a coiled coil. Glycyl lysine isopeptide (Lys-Gly) (interchain with G-Cter in ubiquitin) cross-links involve residues K39 and K59. Disordered stretches follow at residues 59 to 81 (KLEA…ENQI) and 102 to 147 (LAES…TEKL). 2 stretches are compositionally biased toward basic and acidic residues: residues 68–80 (KQTE…KENQ) and 102–114 (LAES…DSHH). A compositionally biased stretch (polar residues) spans 115-126 (LQSNNDNFSKKN). The span at 136–147 (SDTKLKETTEKL) shows a compositional bias: basic and acidic residues. Residue K187 forms a Glycyl lysine isopeptide (Lys-Gly) (interchain with G-Cter in ubiquitin) linkage. At S195 the chain carries Phosphoserine.

As to quaternary structure, homodimer.

It localises to the cytoplasm. It is found in the cytoskeleton. This chain is Tropomyosin-1 (TPM1), found in Saccharomyces cerevisiae (strain ATCC 204508 / S288c) (Baker's yeast).